A 459-amino-acid chain; its full sequence is MDHLPIFCQLRDRDCLIVGGGDVAERKARLLLEAGARLTVNALTFIPQFTVWANEGMLTLVEGPFDETLLDSCWLAIAATDDDTVNQRVSDAAESRRIFCNVVDAPKAASFIMPSIIDRSPLMVAVSSGGTSPVLARLLREKLESLLPQHLGQVARYAGQLRARVKKQFATMGERRRFWEKFFVNDRLAQSLANADEKAVNATTERLFSEPLDHRGEVVLVGAGPGDAGLLTLKGLQQIQQADIVVYDRLVSDDIMNLVRRDADRVFVGKRAGYHCVPQEEINQILLREAQKGKRVVRLKGGDPFIFGRGGEELETLCHAGIPFSVVPGITAASGCSAYSGIPLTHRDYAQSVRLVTGHLKTGGELDWENLAAEKQTLVFYMGLNQAATIQEKLIAFGMQADMPVALVENGTSVKQRVVHGVLTQLGELAQQVESPALIIVGRVVGLRDKLNWFSNYYD.

Residues 1–204 are precorrin-2 dehydrogenase /sirohydrochlorin ferrochelatase; sequence MDHLPIFCQL…ADEKAVNATT (204 aa). NAD(+)-binding positions include 22 to 23 and 43 to 44; these read DV and LT. Serine 128 carries the phosphoserine modification. A uroporphyrinogen-III C-methyltransferase region spans residues 216–459; the sequence is GEVVLVGAGP…KLNWFSNYYD (244 aa). Proline 225 provides a ligand contact to S-adenosyl-L-methionine. Catalysis depends on aspartate 248, which acts as the Proton acceptor. Lysine 270 functions as the Proton donor in the catalytic mechanism. S-adenosyl-L-methionine contacts are provided by residues 301–303, isoleucine 306, 331–332, methionine 382, and glycine 411; these read GGD and TA.

In the N-terminal section; belongs to the precorrin-2 dehydrogenase / sirohydrochlorin ferrochelatase family. It in the C-terminal section; belongs to the precorrin methyltransferase family.

The enzyme catalyses uroporphyrinogen III + 2 S-adenosyl-L-methionine = precorrin-2 + 2 S-adenosyl-L-homocysteine + H(+). The catalysed reaction is precorrin-2 + NAD(+) = sirohydrochlorin + NADH + 2 H(+). It carries out the reaction siroheme + 2 H(+) = sirohydrochlorin + Fe(2+). Its pathway is cofactor biosynthesis; adenosylcobalamin biosynthesis; precorrin-2 from uroporphyrinogen III: step 1/1. The protein operates within cofactor biosynthesis; adenosylcobalamin biosynthesis; sirohydrochlorin from precorrin-2: step 1/1. It functions in the pathway porphyrin-containing compound metabolism; siroheme biosynthesis; precorrin-2 from uroporphyrinogen III: step 1/1. It participates in porphyrin-containing compound metabolism; siroheme biosynthesis; siroheme from sirohydrochlorin: step 1/1. Its pathway is porphyrin-containing compound metabolism; siroheme biosynthesis; sirohydrochlorin from precorrin-2: step 1/1. Functionally, multifunctional enzyme that catalyzes the SAM-dependent methylations of uroporphyrinogen III at position C-2 and C-7 to form precorrin-2 via precorrin-1. Then it catalyzes the NAD-dependent ring dehydrogenation of precorrin-2 to yield sirohydrochlorin. Finally, it catalyzes the ferrochelation of sirohydrochlorin to yield siroheme. This chain is Siroheme synthase, found in Salmonella agona (strain SL483).